A 255-amino-acid chain; its full sequence is 4-hydroxy-tetrahydrodipicolinate reductase (255 aa).

NAD(+)-binding positions include 9-14, 89-91, and 115-118; these read GFKGRM, GTT, and APNF. H145 (proton donor/acceptor) is an active-site residue. A (S)-2,3,4,5-tetrahydrodipicolinate-binding site is contributed by H146. K149 (proton donor) is an active-site residue. 155 to 156 contributes to the (S)-2,3,4,5-tetrahydrodipicolinate binding site; it reads GT.

It belongs to the DapB family.

It is found in the cytoplasm. It carries out the reaction (S)-2,3,4,5-tetrahydrodipicolinate + NAD(+) + H2O = (2S,4S)-4-hydroxy-2,3,4,5-tetrahydrodipicolinate + NADH + H(+). It catalyses the reaction (S)-2,3,4,5-tetrahydrodipicolinate + NADP(+) + H2O = (2S,4S)-4-hydroxy-2,3,4,5-tetrahydrodipicolinate + NADPH + H(+). The protein operates within amino-acid biosynthesis; L-lysine biosynthesis via DAP pathway; (S)-tetrahydrodipicolinate from L-aspartate: step 4/4. Functionally, catalyzes the conversion of 4-hydroxy-tetrahydrodipicolinate (HTPA) to tetrahydrodipicolinate. This is 4-hydroxy-tetrahydrodipicolinate reductase from Streptococcus mutans serotype c (strain ATCC 700610 / UA159).